The primary structure comprises 1038 residues: Pentatricopeptide repeat-containing protein At5g27270 (1038 aa).

Residues 23-38 (SRNSRISIKSSSSSSK) are compositionally biased toward low complexity. Residues 23-69 (SRNSRISIKSSSSSSKVRPDPWSLSDGNPEKPKPRYERPKHPLSDDD) form a disordered region. Residues 50–69 (NPEKPKPRYERPKHPLSDDD) are compositionally biased toward basic and acidic residues. 23 PPR repeats span residues 187–221 (SVVV…GCEP), 222–256 (DAVA…RILL), 257–291 (STSV…GVPP), 292–326 (NEFT…GFVP), 327–361 (EEVT…GIVP), 362–396 (SNYT…KIPA), 397–431 (DEVI…NLLA), 432–466 (DEKT…DIPL), 467–501 (SRFA…GLPD), 502–535 (ASSC…QVHF), 536–570 (DIEL…ARVK), 601–631 (DVMA…MFKT), 634–668 (GSSA…GLRM), 669–699 (EEET…AGES), 703–737 (GKSV…GCDP), 738–772 (GAVT…NIEL), 773–807 (DTVG…GVPC), 808–842 (SIQT…GLYL), 843–877 (DEKI…GIKP), 878–912 (GTPS…GRCT), 913–947 (DLST…GIPL), 948–982 (SHSH…GISP), and 983–1017 (DSAC…SVED).

The protein belongs to the PPR family. P subfamily.

This Arabidopsis thaliana (Mouse-ear cress) protein is Pentatricopeptide repeat-containing protein At5g27270 (EMB976).